Here is a 70-residue protein sequence, read N- to C-terminus: Movement protein TGBp3 (70 aa).

Residues 1–6 (MEANTY) lie on the Lumenal side of the membrane. The helical transmembrane segment at 7–27 (LNAIILVLVVTIIAVISTSLV) threads the bilayer. Topologically, residues 28–70 (RTEPCVIKITGESITVLACKLDAETIRAIADLKPLSVERLSFH) are cytoplasmic.

The protein belongs to the Tymovirales TGBp3 protein family.

It localises to the host endoplasmic reticulum membrane. Functionally, plays a role in viral cell-to-cell propagation, by facilitating genome transport to neighboring plant cells through plasmosdesmata. May induce the formation of granular vesicles derived from the Endoplasmic reticulum, which align on actin filaments. This chain is Movement protein TGBp3, found in Potato virus X (PVX).